We begin with the raw amino-acid sequence, 90 residues long: UPF0297 protein OEOE_1166 (90 aa).

This sequence belongs to the UPF0297 family.

This is UPF0297 protein OEOE_1166 from Oenococcus oeni (strain ATCC BAA-331 / PSU-1).